The following is a 111-amino-acid chain: UPF0145 protein Bphy_3680 (111 aa).

It belongs to the UPF0145 family.

The protein is UPF0145 protein Bphy_3680 of Paraburkholderia phymatum (strain DSM 17167 / CIP 108236 / LMG 21445 / STM815) (Burkholderia phymatum).